The sequence spans 174 residues: Disulfide bond formation protein B (174 aa).

Topologically, residues 1-17 (MSFQVVTGWLDNSPRRI) are cytoplasmic. Residues 18-34 (FAFVSLASIGMLAFGQY) traverse the membrane as a helical segment. Residues 35 to 52 (LQHVVGLEPCPMCIVQRY) lie on the Periplasmic side of the membrane. Cys-44 and Cys-47 are disulfide-bonded. A helical membrane pass occupies residues 53-67 (ALVLVAIIAGLTGAS). The Cytoplasmic segment spans residues 68 to 74 (GRKGLHL). Residues 75-92 (GGAVLMLGSSGFGAYVAA) traverse the membrane as a helical segment. Residues 93–148 (RQSWLQWYPPEVVSCGRDFYGMIETFPLQRAIPMIFKGSGDCSKVDWTFLGGSIAN) are Periplasmic-facing. A disulfide bridge links Cys-107 with Cys-134. The helical transmembrane segment at 149–167 (WTFVVFGLIVLLSLALIWR) threads the bilayer. Over 168 to 174 (RVSRRVS) the chain is Cytoplasmic.

The protein belongs to the DsbB family.

Its subcellular location is the cell inner membrane. Required for disulfide bond formation in some periplasmic proteins. Acts by oxidizing the DsbA protein. This is Disulfide bond formation protein B from Albidiferax ferrireducens (strain ATCC BAA-621 / DSM 15236 / T118) (Rhodoferax ferrireducens).